Consider the following 185-residue polypeptide: Heavy metal-associated isoprenylated plant protein 11 (185 aa).

The 68-residue stretch at 39–106 folds into the HMA domain; the sequence is QQNTNVVFKL…ICKHVAIIAA (68 aa). Basic and acidic residues predominate over residues 109–158; that stretch reads IREPEQNRNPVTRREPNREPEQNRSRVTRREPSREPEPNRAPLARRESRP. Positions 109-185 are disordered; that stretch reads IREPEQNRNP…GENSDGCIIM (77 aa). The residue at position 182 (Cys182) is a Cysteine methyl ester. Cys182 carries S-farnesyl cysteine lipidation. Residues 183–185 constitute a propeptide, removed in mature form; that stretch reads IIM.

This sequence belongs to the HIPP family.

Its function is as follows. Probable heavy-metal-binding protein. This is Heavy metal-associated isoprenylated plant protein 11 from Arabidopsis thaliana (Mouse-ear cress).